Here is a 179-residue protein sequence, read N- to C-terminus: Large ribosomal subunit protein uL5 (179 aa).

Belongs to the universal ribosomal protein uL5 family. Part of the 50S ribosomal subunit; part of the 5S rRNA/L5/L18/L25 subcomplex. Contacts the 5S rRNA and the P site tRNA. Forms a bridge to the 30S subunit in the 70S ribosome.

This is one of the proteins that bind and probably mediate the attachment of the 5S RNA into the large ribosomal subunit, where it forms part of the central protuberance. In the 70S ribosome it contacts protein S13 of the 30S subunit (bridge B1b), connecting the 2 subunits; this bridge is implicated in subunit movement. Contacts the P site tRNA; the 5S rRNA and some of its associated proteins might help stabilize positioning of ribosome-bound tRNAs. This Rickettsia africae (strain ESF-5) protein is Large ribosomal subunit protein uL5.